The following is a 170-amino-acid chain: Myosin regulatory light chain 2, skeletal muscle isoform (170 aa).

A2 bears the N,N,N-trimethylalanine mark. Phosphoserine is present on residues S16 and S17. Phosphothreonine is present on residues T26 and T36. One can recognise an EF-hand 1 domain in the interval 26–61; that stretch reads TQIQEFKEAFTVIDQNRDGIIDKEDLRDTFAAMGRL. D39, N41, D43, and D50 together coordinate Ca(2+). S76 is modified (phosphoserine). 2 EF-hand domains span residues 96–131 and 132–167; these read DPED…QCDR and FSQE…GDAK. T102 bears the Phosphothreonine mark.

In terms of assembly, myosin is a hexamer of 2 heavy chains and 4 light chains.

Plays a role in muscle contraction. The polypeptide is Myosin regulatory light chain 2, skeletal muscle isoform (Bos taurus (Bovine)).